Consider the following 211-residue polypeptide: tRNA (guanine-N(7)-)-methyltransferase (211 aa).

Residues Glu-43, Asp-68, Asn-95, and Asn-117 each contribute to the S-adenosyl-L-methionine site. Substrate is bound by residues Lys-121, Asp-153, and 190–193 (TEYE).

It belongs to the class I-like SAM-binding methyltransferase superfamily. TrmB family.

The catalysed reaction is guanosine(46) in tRNA + S-adenosyl-L-methionine = N(7)-methylguanosine(46) in tRNA + S-adenosyl-L-homocysteine. It functions in the pathway tRNA modification; N(7)-methylguanine-tRNA biosynthesis. In terms of biological role, catalyzes the formation of N(7)-methylguanine at position 46 (m7G46) in tRNA. The polypeptide is tRNA (guanine-N(7)-)-methyltransferase (Clostridium kluyveri (strain ATCC 8527 / DSM 555 / NBRC 12016 / NCIMB 10680 / K1)).